A 327-amino-acid polypeptide reads, in one-letter code: 2-keto-3-deoxygluconate permease (327 aa).

Transmembrane regions (helical) follow at residues 10–30 (IPGGMMLVPLFLGALCHTFSP), 42–62 (GMITGTVPILAVWFFCMGASI), 73–93 (KSGTLVVTKIAVAWVVAAIAS), 95–115 (IIPEHGVEVGFFAGLSTLALV), 139–159 (AGAFVLMSLESGPLMTMIILG), 163–183 (IASFEPHVFVGAVLPFLVGFA), 199–219 (VQTLIPFFAFALGNTIDLTVI), 224–244 (LLGILLGVAVIIVTGIPLIIA), 254–274 (TAGIAASSSAGAAVATPVLIA), and 289–309 (SLVATAVIVTSILVPIITSIW).

Belongs to the KdgT transporter family.

The protein localises to the cell inner membrane. It catalyses the reaction 2-dehydro-3-deoxy-D-gluconate(in) + H(+)(in) = 2-dehydro-3-deoxy-D-gluconate(out) + H(+)(out). Catalyzes the proton-dependent uptake of 2-keto-3-deoxygluconate (KDG) into the cell. The chain is 2-keto-3-deoxygluconate permease from Escherichia coli O139:H28 (strain E24377A / ETEC).